The chain runs to 243 residues: Small ribosomal subunit protein uS2c (243 aa).

Residues 224 to 243 (GNNGKVSSDQEDTQELQTVQ) are disordered.

The protein belongs to the universal ribosomal protein uS2 family.

The protein localises to the plastid. It is found in the chloroplast. This Rhodomonas salina (Cryptomonas salina) protein is Small ribosomal subunit protein uS2c (rps2).